The sequence spans 383 residues: MENFPTEYFLNTSVRLLEYIRYRDSNYTREERIENLHYAYNKAAHHFAQPRQQQLLKVDPKRLQASLQTIVGMVVYSWAKVSKECMADLSIHYTYTLVLDDSSDDPYPAMMNYFNDLQAGREQAHPWWALVNEHFPNVLRHFGPFCSLNLIRSTLDFFEGCWIEQYNFGGFPGSHDYPQFLRRMNGLGHCVGASLWPKEQFDERGLFLEITSAIAQMENWMVWVNDLMSFYKEFDDERDQISLVKNYVVSDEITLHEALEKLTQDTLHSSKQMVAVFSEKDPQVMDTIECFMHGYVTWHLCDHRYRLNEIYEKVKGQKTEDAEKFCKFYEQAANVGAVSPSEWAYPPIAQLANIRTKDVKDLKDVKDLKEIQKPLLSSIELVE.

It belongs to the trichodiene synthase family.

It catalyses the reaction (2E,6E)-farnesyl diphosphate = trichodiene + diphosphate. It participates in sesquiterpene biosynthesis; trichothecene biosynthesis. TS is a member of the terpene cyclase group of enzymes. It catalyzes the isomerization and cyclization of farnesyl pyro-phosphate to form trichodiene, the first cyclic intermediate in the biosynthetic pathway for trichothecenes. It serves to branch trichothecene biosynthesis from the isoprenoid pathway. The polypeptide is Trichodiene synthase (TRI5) (Gibberella pulicaris).